An 85-amino-acid polypeptide reads, in one-letter code: ATP synthase subunit c (85 aa).

The next 2 helical transmembrane spans lie at 22–39 (AIGAGLAVIGAGLGIGKI) and 65–85 (AALIEGVALLAVVVCLLVFFL).

This sequence belongs to the ATPase C chain family. As to quaternary structure, F-type ATPases have 2 components, F(1) - the catalytic core - and F(0) - the membrane proton channel. F(1) has five subunits: alpha(3), beta(3), gamma(1), delta(1), epsilon(1). F(0) has three main subunits: a(1), b(2) and c(10-14). The alpha and beta chains form an alternating ring which encloses part of the gamma chain. F(1) is attached to F(0) by a central stalk formed by the gamma and epsilon chains, while a peripheral stalk is formed by the delta and b chains.

It localises to the cell inner membrane. In terms of biological role, f(1)F(0) ATP synthase produces ATP from ADP in the presence of a proton or sodium gradient. F-type ATPases consist of two structural domains, F(1) containing the extramembraneous catalytic core and F(0) containing the membrane proton channel, linked together by a central stalk and a peripheral stalk. During catalysis, ATP synthesis in the catalytic domain of F(1) is coupled via a rotary mechanism of the central stalk subunits to proton translocation. Functionally, key component of the F(0) channel; it plays a direct role in translocation across the membrane. A homomeric c-ring of between 10-14 subunits forms the central stalk rotor element with the F(1) delta and epsilon subunits. This Bacteroides thetaiotaomicron (strain ATCC 29148 / DSM 2079 / JCM 5827 / CCUG 10774 / NCTC 10582 / VPI-5482 / E50) protein is ATP synthase subunit c.